The sequence spans 156 residues: SsrA-binding protein (156 aa).

This sequence belongs to the SmpB family.

The protein resides in the cytoplasm. Functionally, required for rescue of stalled ribosomes mediated by trans-translation. Binds to transfer-messenger RNA (tmRNA), required for stable association of tmRNA with ribosomes. tmRNA and SmpB together mimic tRNA shape, replacing the anticodon stem-loop with SmpB. tmRNA is encoded by the ssrA gene; the 2 termini fold to resemble tRNA(Ala) and it encodes a 'tag peptide', a short internal open reading frame. During trans-translation Ala-aminoacylated tmRNA acts like a tRNA, entering the A-site of stalled ribosomes, displacing the stalled mRNA. The ribosome then switches to translate the ORF on the tmRNA; the nascent peptide is terminated with the 'tag peptide' encoded by the tmRNA and targeted for degradation. The ribosome is freed to recommence translation, which seems to be the essential function of trans-translation. This Clostridium perfringens (strain 13 / Type A) protein is SsrA-binding protein.